We begin with the raw amino-acid sequence, 93 residues long: Sec-independent protein translocase protein TatA (93 aa).

A helical membrane pass occupies residues 1 to 21 (MGIFDWKHWIVILVVVVLVFG). A disordered region spans residues 43 to 93 (MNDDEKPAEPVVPPAAQPVPPVQPQQSAPLNQPHTIDVQAQKVEEPTRKDS). Residues 52–65 (PVVPPAAQPVPPVQ) show a composition bias toward pro residues. A compositionally biased stretch (basic and acidic residues) spans 84–93 (KVEEPTRKDS).

The protein belongs to the TatA/E family. As to quaternary structure, the Tat system comprises two distinct complexes: a TatABC complex, containing multiple copies of TatA, TatB and TatC subunits, and a separate TatA complex, containing only TatA subunits. Substrates initially bind to the TatABC complex, which probably triggers association of the separate TatA complex to form the active translocon.

The protein resides in the cell inner membrane. Functionally, part of the twin-arginine translocation (Tat) system that transports large folded proteins containing a characteristic twin-arginine motif in their signal peptide across membranes. TatA could form the protein-conducting channel of the Tat system. The protein is Sec-independent protein translocase protein TatA of Pseudomonas fluorescens (strain ATCC BAA-477 / NRRL B-23932 / Pf-5).